The following is a 173-amino-acid chain: Crossover junction endodeoxyribonuclease RuvC (173 aa).

Catalysis depends on residues aspartate 8, glutamate 67, and aspartate 139. Positions 8, 67, and 139 each coordinate Mg(2+).

This sequence belongs to the RuvC family. Homodimer which binds Holliday junction (HJ) DNA. The HJ becomes 2-fold symmetrical on binding to RuvC with unstacked arms; it has a different conformation from HJ DNA in complex with RuvA. In the full resolvosome a probable DNA-RuvA(4)-RuvB(12)-RuvC(2) complex forms which resolves the HJ. Mg(2+) is required as a cofactor.

It is found in the cytoplasm. It carries out the reaction Endonucleolytic cleavage at a junction such as a reciprocal single-stranded crossover between two homologous DNA duplexes (Holliday junction).. Its function is as follows. The RuvA-RuvB-RuvC complex processes Holliday junction (HJ) DNA during genetic recombination and DNA repair. Endonuclease that resolves HJ intermediates. Cleaves cruciform DNA by making single-stranded nicks across the HJ at symmetrical positions within the homologous arms, yielding a 5'-phosphate and a 3'-hydroxyl group; requires a central core of homology in the junction. The consensus cleavage sequence is 5'-(A/T)TT(C/G)-3'. Cleavage occurs on the 3'-side of the TT dinucleotide at the point of strand exchange. HJ branch migration catalyzed by RuvA-RuvB allows RuvC to scan DNA until it finds its consensus sequence, where it cleaves and resolves the cruciform DNA. The polypeptide is Crossover junction endodeoxyribonuclease RuvC (Shewanella pealeana (strain ATCC 700345 / ANG-SQ1)).